The primary structure comprises 344 residues: Methionine import ATP-binding protein MetN (344 aa).

Positions 2–241 constitute an ABC transporter domain; it reads IKLEKISKIF…PQTQLAKEFI (240 aa). 38 to 45 contributes to the ATP binding site; sequence GASGAGKS.

Belongs to the ABC transporter superfamily. Methionine importer (TC 3.A.1.24) family. As to quaternary structure, the complex is composed of two ATP-binding proteins (MetN), two transmembrane proteins (MetI) and a solute-binding protein (MetQ).

It is found in the cell inner membrane. The catalysed reaction is L-methionine(out) + ATP + H2O = L-methionine(in) + ADP + phosphate + H(+). It carries out the reaction D-methionine(out) + ATP + H2O = D-methionine(in) + ADP + phosphate + H(+). Its function is as follows. Part of the ABC transporter complex MetNIQ involved in methionine import. Responsible for energy coupling to the transport system. The chain is Methionine import ATP-binding protein MetN from Pasteurella multocida (strain Pm70).